Consider the following 486-residue polypeptide: Adenosylhomocysteinase (486 aa).

Substrate is bound by residues Thr63, Asp147, and Glu209. 210–212 (TTT) lines the NAD(+) pocket. Positions 239 and 243 each coordinate substrate. NAD(+)-binding positions include Asn244, 273–278 (GYGDVG), Glu296, Asn331, 352–354 (IGH), and Asn400.

Belongs to the adenosylhomocysteinase family. Requires NAD(+) as cofactor.

The catalysed reaction is S-adenosyl-L-homocysteine + H2O = L-homocysteine + adenosine. It participates in amino-acid biosynthesis; L-homocysteine biosynthesis; L-homocysteine from S-adenosyl-L-homocysteine: step 1/1. In terms of biological role, adenosylhomocysteine is a competitive inhibitor of S-adenosyl-L-methionine-dependent methyl transferase reactions; therefore adenosylhomocysteinase may play a key role in the control of methylations via regulation of the intracellular concentration of adenosylhomocysteine. In Trichomonas vaginalis, this protein is Adenosylhomocysteinase.